We begin with the raw amino-acid sequence, 335 residues long: Taste receptor type 2 member 119 (335 aa).

Over 1–7 (MMEGHML) the chain is Extracellular. Residues 8–28 (FFLLVVVVQFLTGVLANGLIV) traverse the membrane as a helical segment. Residues 29–43 (VVNAIDLIMWKKMAP) lie on the Cytoplasmic side of the membrane. The helical transmembrane segment at 44–64 (LDLLLFCLATSRIILQLCILF) threads the bilayer. Over 65–81 (AQLGLSCLVRHTLFADN) the chain is Extracellular. An N-linked (GlcNAc...) asparagine glycan is attached at N81. Residues 82–102 (VTFVYIINELSLWFATWLGVF) traverse the membrane as a helical segment. Residues 103 to 124 (YCAKIATIPHPLFLWLKMRISR) are Cytoplasmic-facing. Residues 125–145 (LVPWLILASVVYVTVTTFIHS) form a helical membrane-spanning segment. Residues 146 to 176 (RETSELPKQIFISFFSKNTTRVRPAHATLLS) lie on the Extracellular side of the membrane. The N-linked (GlcNAc...) asparagine glycan is linked to N163. Residues 177 to 197 (VFVFGLTLPFLIFTVAVLLLL) form a helical membrane-spanning segment. Residues 198-224 (SSLWNHSRQMRTMVGTREPSRHALVSA) lie on the Cytoplasmic side of the membrane. The chain crosses the membrane as a helical span at residues 225–245 (MLSILSFLILYLSHDMVAVLI). The Extracellular portion of the chain corresponds to 246 to 256 (CTQGLHFGSRT). Residues 257 to 277 (FAFCLLVIGMYPSLHSIVLIL) form a helical membrane-spanning segment. The Cytoplasmic segment spans residues 278 to 335 (GNPKLKRNAKTFIVHCKCCHCARAWVTSRNPRLSDLPVPATHHSANKTSCSEACIMPS).

Belongs to the G-protein coupled receptor T2R family. As to expression, expressed in subsets of taste receptor cells of the tongue and palate epithelium and exclusively in gustducin-positive cells. Expressed in 15% taste bud cells in circumvallate and foliate papillae but only in 2% in fungiform papillae. Expressed in the gastro and duodenal tissue. Not expressed in colon, liver, heart and kidney.

Its subcellular location is the membrane. Gustducin-coupled receptor implicated in the perception of bitter compounds in the oral cavity and the gastrointestinal tract. Signals through PLCB2 and the calcium-regulated cation channel TRPM5. The sequence is that of Taste receptor type 2 member 119 (Tas2r119) from Mus musculus (Mouse).